A 190-amino-acid polypeptide reads, in one-letter code: dTTP/UTP pyrophosphatase (190 aa).

The active-site Proton acceptor is the aspartate 67.

This sequence belongs to the Maf family. YhdE subfamily. It depends on a divalent metal cation as a cofactor.

It localises to the cytoplasm. It catalyses the reaction dTTP + H2O = dTMP + diphosphate + H(+). It carries out the reaction UTP + H2O = UMP + diphosphate + H(+). Functionally, nucleoside triphosphate pyrophosphatase that hydrolyzes dTTP and UTP. May have a dual role in cell division arrest and in preventing the incorporation of modified nucleotides into cellular nucleic acids. The polypeptide is dTTP/UTP pyrophosphatase (Aquifex aeolicus (strain VF5)).